Here is a 147-residue protein sequence, read N- to C-terminus: Protein phosphatase 1 regulatory subunit 14A (147 aa).

The segment covering 1-11 (MAAQRLGKRVL) has biased composition (basic residues). Positions 1–36 (MAAQRLGKRVLSKLQSPSRARGPGGSPSGLQKRHAR) are disordered. At serine 26 the chain carries Phosphoserine. The segment at 35 to 120 (ARVTVKYDRR…LLAKLRGLHK (86 aa)) is inhibitory. Threonine 38 is subject to Phosphothreonine; by PKC. Residues 118-147 (LHKQPGFPQPSPSDDPSLSPRQDRAHTAPP) form a disordered region. Residues serine 128, serine 134, and serine 136 each carry the phosphoserine modification. Positions 138–147 (RQDRAHTAPP) are enriched in basic and acidic residues.

Belongs to the PP1 inhibitor family.

It is found in the cytoplasm. Its function is as follows. Inhibitor of PPP1CA. Has over 1000-fold higher inhibitory activity when phosphorylated, creating a molecular switch for regulating the phosphorylation status of PPP1CA substrates and smooth muscle contraction. This is Protein phosphatase 1 regulatory subunit 14A (Ppp1r14a) from Mus musculus (Mouse).